Consider the following 310-residue polypeptide: Aminoacyl tRNA synthase complex-interacting multifunctional protein 1 (310 aa).

Ala2 bears the N-acetylalanine mark. The tract at residues 6–46 (AVLKRLEQKGAEADQIIEYLKQQVALLKEKAILQATMREEK) is required for fibroblast proliferation. Residues 54 to 192 (KLKKEIEELK…APRTVVSGLV (139 aa)) form an interaction with HSP90B1 region. Residues 92–110 (ASESVVQSPSVATTASPAT) show a composition bias toward polar residues. The segment at 92–147 (ASESVVQSPSVATTASPATKEQIKAGEEKKVKEKTEKKGEKKEKQQSAAASTDSKP) is disordered. Residues 101–115 (SVATTASPATKEQIK) are required for endothelial cell death. The span at 112 to 136 (EQIKAGEEKKVKEKTEKKGEKKEKQ) shows a compositional bias: basic and acidic residues. Residues 115-190 (KAGEEKKVKE…EAAPRTVVSG (76 aa)) are required for endothelial cell migration. Ser138 carries the phosphoserine modification. One can recognise a tRNA-binding domain in the interval 149-250 (DASRLDLRIG…NGSVPGDRIT (102 aa)). Residue Lys267 is modified to N6-succinyllysine.

As to quaternary structure, homodimer. Part of the multisynthetase complex (MSC), a multisubunit complex that groups tRNA ligases for Arg (RARS1), Asp (DARS1), Gln (QARS1), Ile (IARS1), Leu (LARS1), Lys (KARS1), Met (MARS1) the bifunctional ligase for Glu and Pro (EPRS1) and the auxiliary subunits AIMP1/p43, AIMP2/p38 and EEF1E1/p18. Interacts (via N-terminus) with RARS1 (via N-terminus). Part of a complex composed of RARS1, QARS1 and AIMP1. Interacts (via C-terminus) with SMURF2. Interacts (via N-terminus) with HSP90B1/gp96 (via C-terminus). Interacts with PSMA7. Interacts with TARS3. In terms of processing, cleaved by caspase-7 in response to apoptosis to produce EMAP-II. In terms of tissue distribution, highly expressed in salivary glands and pancreatic alpha cells in the adult (at protein level). In the embryo, expressed primarily at sites of tissue remodeling such as ganglia, developing bones and teeth.

It is found in the nucleus. Its subcellular location is the cytoplasm. It localises to the cytosol. The protein resides in the secreted. The protein localises to the endoplasmic reticulum. It is found in the golgi apparatus. Its function is as follows. Non-catalytic component of the multisynthase complex. Stimulates the catalytic activity of cytoplasmic arginyl-tRNA synthase. Binds tRNA. Possesses inflammatory cytokine activity. Negatively regulates TGF-beta signaling through stabilization of SMURF2 by binding to SMURF2 and inhibiting its SMAD7-mediated degradation. Involved in glucose homeostasis through induction of glucagon secretion at low glucose levels. Promotes dermal fibroblast proliferation and wound repair. Regulates KDELR1-mediated retention of HSP90B1/gp96 in the endoplasmic reticulum. Plays a role in angiogenesis by inducing endothelial cell migration at low concentrations and endothelian cell apoptosis at high concentrations. Induces maturation of dendritic cells and monocyte cell adhesion. Modulates endothelial cell responses by degrading HIF-1A through interaction with PSMA7. The chain is Aminoacyl tRNA synthase complex-interacting multifunctional protein 1 (Aimp1) from Mus musculus (Mouse).